The sequence spans 30 residues: Urease subunit alpha (30 aa).

This sequence belongs to the metallo-dependent hydrolases superfamily. Urease alpha subunit family. As to quaternary structure, heterotrimer of UreA (gamma), UreB (beta) and UreC (alpha) subunits. Three heterotrimers associate to form the active enzyme. It depends on Ni cation as a cofactor.

The protein resides in the cytoplasm. The catalysed reaction is urea + 2 H2O + H(+) = hydrogencarbonate + 2 NH4(+). It participates in nitrogen metabolism; urea degradation; CO(2) and NH(3) from urea (urease route): step 1/1. In Escherichia coli, this protein is Urease subunit alpha (ureC).